We begin with the raw amino-acid sequence, 38 residues long: Large ribosomal subunit protein bL36 (38 aa).

This sequence belongs to the bacterial ribosomal protein bL36 family.

In Roseiflexus sp. (strain RS-1), this protein is Large ribosomal subunit protein bL36.